An 886-amino-acid chain; its full sequence is DNA replication licensing factor mcm2 (886 aa).

The segment covering 1–12 (MADSSESFNIAT) has biased composition (polar residues). 3 disordered regions span residues 1-65 (MADS…MERD), 77-104 (VEGL…MRMR), and 120-151 (LYDS…EDEE). Acidic residues-rich tracts occupy residues 47 to 58 (VPEEEEDGEELI) and 78 to 88 (EGLDDEEDVED). Residues 95–104 (EAAEQSMRMR) are compositionally biased toward basic and acidic residues. Residues 314–340 (CNKCNFILGPFFQSQNQEVRPGSCPEC) form a C4-type zinc finger. An MCM domain is found at 458–665 (IGERIFASIA…QDEMLARFVV (208 aa)). 2 residues coordinate ADP: Ser-515 and Gln-516. Positions 640-643 (SRFD) match the Arginine finger motif.

This sequence belongs to the MCM family. Component of the mcm2-7 complex (RLF-M). The complex forms a toroidal hexameric ring with the proposed subunit order mcm2-mcm6-mcm4-mcm7-mcm3-mcm5. Component of the replisome complex. Component of the CMG helicase complex, composed of the mcm2-7 complex, the GINS complex and cdc45. May be in a phosphorylated state in the mitotic mcm complex. Phosphorylated in the interphase mcm complex. Phosphorylated by the cdc7-dbf4 and cdc7-dbf4b complexes.

It is found in the nucleus. The protein localises to the chromosome. The catalysed reaction is ATP + H2O = ADP + phosphate + H(+). Acts as a component of the MCM2-7 complex (MCM complex) which is the replicative helicase essential for 'once per cell cycle' DNA replication initiation and elongation in eukaryotic cells. Core component of CDC45-MCM-GINS (CMG) helicase, the molecular machine that unwinds template DNA during replication, and around which the replisome is built. The active ATPase sites in the MCM2-7 ring are formed through the interaction surfaces of two neighboring subunits such that a critical structure of a conserved arginine finger motif is provided in trans relative to the ATP-binding site of the Walker A box of the adjacent subunit. The six ATPase active sites, however, are likely to contribute differentially to the complex helicase activity. Required for the entry in S phase and for cell division. This chain is DNA replication licensing factor mcm2 (mcm2), found in Xenopus laevis (African clawed frog).